Consider the following 429-residue polypeptide: UDP-N-acetylglucosamine 1-carboxyvinyltransferase (429 aa).

22-23 (KN) contacts phosphoenolpyruvate. UDP-N-acetyl-alpha-D-glucosamine is bound at residue arginine 102. The active-site Proton donor is the cysteine 126. Cysteine 126 is modified (2-(S-cysteinyl)pyruvic acid O-phosphothioketal). UDP-N-acetyl-alpha-D-glucosamine is bound by residues 131-135 (RPVDL), aspartate 316, and isoleucine 338.

This sequence belongs to the EPSP synthase family. MurA subfamily.

The protein localises to the cytoplasm. It carries out the reaction phosphoenolpyruvate + UDP-N-acetyl-alpha-D-glucosamine = UDP-N-acetyl-3-O-(1-carboxyvinyl)-alpha-D-glucosamine + phosphate. It functions in the pathway cell wall biogenesis; peptidoglycan biosynthesis. Functionally, cell wall formation. Adds enolpyruvyl to UDP-N-acetylglucosamine. This chain is UDP-N-acetylglucosamine 1-carboxyvinyltransferase, found in Nitrobacter hamburgensis (strain DSM 10229 / NCIMB 13809 / X14).